The following is a 166-amino-acid chain: Small ribosomal subunit protein uS5 (166 aa).

Residues 11-74 (LVEKLVAVDR…EAARRNMITV (64 aa)) form the S5 DRBM domain.

Belongs to the universal ribosomal protein uS5 family. Part of the 30S ribosomal subunit. Contacts proteins S4 and S8.

Functionally, with S4 and S12 plays an important role in translational accuracy. Located at the back of the 30S subunit body where it stabilizes the conformation of the head with respect to the body. The polypeptide is Small ribosomal subunit protein uS5 (Acinetobacter baumannii (strain ATCC 17978 / DSM 105126 / CIP 53.77 / LMG 1025 / NCDC KC755 / 5377)).